Reading from the N-terminus, the 496-residue chain is Cobyric acid synthase (496 aa).

The 170-residue stretch at 258 to 427 (TLTVAAIRLP…WHGLLDNDAL (170 aa)) folds into the GATase cobBQ-type domain. Cys339 functions as the Nucleophile in the catalytic mechanism. His419 is a catalytic residue.

It belongs to the CobB/CobQ family. CobQ subfamily.

The protein operates within cofactor biosynthesis; adenosylcobalamin biosynthesis. Its function is as follows. Catalyzes amidations at positions B, D, E, and G on adenosylcobyrinic A,C-diamide. NH(2) groups are provided by glutamine, and one molecule of ATP is hydrogenolyzed for each amidation. In Mycolicibacterium smegmatis (strain ATCC 700084 / mc(2)155) (Mycobacterium smegmatis), this protein is Cobyric acid synthase.